Reading from the N-terminus, the 250-residue chain is Triosephosphate isomerase (250 aa).

9-11 (NWK) is a substrate binding site. The Electrophile role is filled by H100. The active-site Proton acceptor is E169. Residues G175, S208, and 229–230 (GG) contribute to the substrate site.

It belongs to the triosephosphate isomerase family. Homodimer.

It localises to the cytoplasm. The catalysed reaction is D-glyceraldehyde 3-phosphate = dihydroxyacetone phosphate. The protein operates within carbohydrate biosynthesis; gluconeogenesis. Its pathway is carbohydrate degradation; glycolysis; D-glyceraldehyde 3-phosphate from glycerone phosphate: step 1/1. Its function is as follows. Involved in the gluconeogenesis. Catalyzes stereospecifically the conversion of dihydroxyacetone phosphate (DHAP) to D-glyceraldehyde-3-phosphate (G3P). The sequence is that of Triosephosphate isomerase from Synechococcus sp. (strain JA-2-3B'a(2-13)) (Cyanobacteria bacterium Yellowstone B-Prime).